A 567-amino-acid polypeptide reads, in one-letter code: Thiol:disulfide interchange protein DsbD (567 aa).

Positions 1 to 19 (MAQRIFTLILLLCSTSAFA) are cleaved as a signal peptide. 2 cysteine pairs are disulfide-bonded: cysteine 122-cysteine 128 and cysteine 185-cysteine 307. 8 consecutive transmembrane segments (helical) span residues 166-186 (LPFSALWALLIGIGIAFTPCV), 211-231 (LLAFIYVQGMALTYTALGLVV), 246-266 (YVLIGLAIVFTLLALSMFGLF), 299-319 (IAGLICSPCTTAPLSAILLYI), 326-346 (WLGGGTLYLYALGMGLPLMLV), 360-380 (WMAHVKTAFGFVILALPVFLL), 387-407 (AWGLRLWSLLGVAFFGWAFIT), and 418-438 (IVQIILLAAALISVRPLQDWA). Residues 435-567 (QDWAFGSPSA…FSAHLHDRQP (133 aa)) form the Thioredoxin domain. Cysteine 482 and cysteine 485 form a disulfide bridge.

This sequence belongs to the thioredoxin family. DsbD subfamily.

It localises to the cell inner membrane. The catalysed reaction is [protein]-dithiol + NAD(+) = [protein]-disulfide + NADH + H(+). It carries out the reaction [protein]-dithiol + NADP(+) = [protein]-disulfide + NADPH + H(+). In terms of biological role, required to facilitate the formation of correct disulfide bonds in some periplasmic proteins and for the assembly of the periplasmic c-type cytochromes. Acts by transferring electrons from cytoplasmic thioredoxin to the periplasm. This transfer involves a cascade of disulfide bond formation and reduction steps. In Salmonella paratyphi A (strain ATCC 9150 / SARB42), this protein is Thiol:disulfide interchange protein DsbD.